Here is a 758-residue protein sequence, read N- to C-terminus: 5-methyltetrahydropteroyltriglutamate--homocysteine methyltransferase (758 aa).

5-methyltetrahydropteroyltri-L-glutamate is bound by residues 16-19 (RELK) and K116. L-homocysteine is bound by residues 436-438 (IGS) and E489. L-methionine-binding positions include 436-438 (IGS) and E489. Residues 520 to 521 (RC) and W566 contribute to the 5-methyltetrahydropteroyltri-L-glutamate site. An L-homocysteine-binding site is contributed by D604. Position 604 (D604) interacts with L-methionine. E610 contacts 5-methyltetrahydropteroyltri-L-glutamate. 3 residues coordinate Zn(2+): H646, C648, and E670. Catalysis depends on H699, which acts as the Proton donor. C731 contributes to the Zn(2+) binding site.

It belongs to the vitamin-B12 independent methionine synthase family. Requires Zn(2+) as cofactor.

It catalyses the reaction 5-methyltetrahydropteroyltri-L-glutamate + L-homocysteine = tetrahydropteroyltri-L-glutamate + L-methionine. It participates in amino-acid biosynthesis; L-methionine biosynthesis via de novo pathway; L-methionine from L-homocysteine (MetE route): step 1/1. In terms of biological role, catalyzes the transfer of a methyl group from 5-methyltetrahydrofolate to homocysteine resulting in methionine formation. In Xylella fastidiosa (strain M12), this protein is 5-methyltetrahydropteroyltriglutamate--homocysteine methyltransferase.